Consider the following 1114-residue polypeptide: Hephaestin-like protein (1114 aa).

The N-terminal stretch at methionine 1–alanine 26 is a signal peptide. 6 Plastocyanin-like domains span residues isoleucine 27–arginine 210, glutamine 218–cysteine 365, lysine 380–cysteine 562, threonine 572–cysteine 719, lysine 730–cysteine 915, and threonine 924–alanine 1114. The Extracellular portion of the chain corresponds to isoleucine 27 to alanine 1091. Residue asparagine 121 is glycosylated (N-linked (GlcNAc...) asparagine). Positions 129, 131, 189, and 191 each coordinate Cu cation. An intrachain disulfide couples cysteine 183 to cysteine 209. Asparagine 236 is a glycosylation site (N-linked (GlcNAc...) asparagine). Cysteine 284 and cysteine 365 form a disulfide bridge. Cu cation is bound by residues histidine 303, cysteine 346, and histidine 351. Residues asparagine 361, asparagine 478, and asparagine 489 are each glycosylated (N-linked (GlcNAc...) asparagine). Disulfide bonds link cysteine 536–cysteine 562 and cysteine 638–cysteine 719. Histidine 657, cysteine 700, histidine 705, and methionine 710 together coordinate Cu cation. The N-linked (GlcNAc...) asparagine glycan is linked to asparagine 831. Cysteine 889 and cysteine 915 are joined by a disulfide. A glycan (N-linked (GlcNAc...) asparagine) is linked at asparagine 944. Cu cation is bound by residues histidine 1014, histidine 1017, histidine 1019, histidine 1059, cysteine 1060, histidine 1061, histidine 1065, and methionine 1070. Residues serine 1092 to leucine 1112 traverse the membrane as a helical segment. Topologically, residues lysine 1113–alanine 1114 are cytoplasmic.

Belongs to the multicopper oxidase family. Requires Cu cation as cofactor. Component of the acid-insoluble and acid-soluble organic matrix of the aragonitic skeleton (at protein level).

It localises to the membrane. Functionally, may function as a ferroxidase and may be involved in copper transport and homeostasis. This chain is Hephaestin-like protein, found in Acropora millepora (Staghorn coral).